A 321-amino-acid chain; its full sequence is Ferredoxin--NADP reductase (321 aa).

The FAD site is built by D34, Q42, Y47, V87, F119, D278, and T319.

The protein belongs to the ferredoxin--NADP reductase type 2 family. As to quaternary structure, homodimer. Requires FAD as cofactor.

The catalysed reaction is 2 reduced [2Fe-2S]-[ferredoxin] + NADP(+) + H(+) = 2 oxidized [2Fe-2S]-[ferredoxin] + NADPH. This chain is Ferredoxin--NADP reductase, found in Streptococcus pneumoniae serotype 4 (strain ATCC BAA-334 / TIGR4).